The following is an 856-amino-acid chain: Subtilisin-like protease SBT2.2 (856 aa).

The signal sequence occupies residues Met1–Ser21. The propeptide at Asn22–Ala159 is activation peptide. Asn35 and Asn85 each carry an N-linked (GlcNAc...) asparagine glycan. The region spanning Val40–Ala159 is the Inhibitor I9 domain. The Peptidase S8 domain occupies Pro164–Leu709. Asp193 functions as the Charge relay system in the catalytic mechanism. Residues Asn204 and Asn255 are each glycosylated (N-linked (GlcNAc...) asparagine). His269 acts as the Charge relay system in catalysis. Asn412, Asn441, Asn495, Asn540, and Asn568 each carry an N-linked (GlcNAc...) asparagine glycan. Residues Met432–Ser528 form the PA domain. The active-site Charge relay system is the Ser634. N-linked (GlcNAc...) asparagine glycans are attached at residues Asn704, Asn730, Asn738, Asn748, Asn767, Asn782, and Asn823.

Belongs to the peptidase S8 family.

It localises to the secreted. This is Subtilisin-like protease SBT2.2 from Arabidopsis thaliana (Mouse-ear cress).